The chain runs to 460 residues: MHPSDQTIFALATGQLPSAIAMVRVSGPRAGDLLTALTGSLPPPRTARRVLIRDQNQDLIDDGVALWFAGPASATGEDVAEFHIHGGRAVLAALVRALSAFDGVRPAEPGEFTRRAFENGKLDLTEAEGLDDLIHADTEAQRRQAVRQLGGLLGDRARRWRAQIIEATALIEAGIDFADEGDVQGELMAPALQTIAALHDEIAEVLAAQGRSERLRDGMVVAIAGPPNVGKSTLINRLARREVAIVSPHAGTTRDVIEVQLDLGGYPVTVIDTAGIRESNDPVEQEGVRRARARAAEADLVLWLGEGEMTGDAVAASAPVWRVRNKIDLRGGEGDGGPVGLPVEPLAAALRQTDGAWGGNAAFEISALRGQGLGELIAAIEDFAAQYFASGETALISRARHRTLLQDAAAMLQRSLQHDLPAELVAEELRLAGVALGRLLGRVDVEDVLGEIFSRFCIGK.

(6S)-5-formyl-5,6,7,8-tetrahydrofolate contacts are provided by R24, E81, and K121. The TrmE-type G domain occupies 218–385 (GMVVAIAGPP…LIAAIEDFAA (168 aa)). GTP contacts are provided by residues 228-233 (NVGKST), 247-253 (SPHAGTT), and 272-275 (DTAG). Mg(2+) is bound by residues S232 and T253. K460 serves as a coordination point for (6S)-5-formyl-5,6,7,8-tetrahydrofolate.

Belongs to the TRAFAC class TrmE-Era-EngA-EngB-Septin-like GTPase superfamily. TrmE GTPase family. In terms of assembly, homodimer. Heterotetramer of two MnmE and two MnmG subunits. The cofactor is K(+).

The protein localises to the cytoplasm. Exhibits a very high intrinsic GTPase hydrolysis rate. Involved in the addition of a carboxymethylaminomethyl (cmnm) group at the wobble position (U34) of certain tRNAs, forming tRNA-cmnm(5)s(2)U34. This chain is tRNA modification GTPase MnmE, found in Rhodopseudomonas palustris (strain BisB5).